The chain runs to 281 residues: Arylamine N-acetyltransferase / N-hydroxyarylamine O-acetyltransferase (281 aa).

C69 acts as the Acyl-thioester intermediate in catalysis. Active-site residues include H107 and D122.

It belongs to the arylamine N-acetyltransferase family. In terms of assembly, monomer and homodimer.

Its subcellular location is the cytoplasm. The catalysed reaction is an arylamine + acetyl-CoA = an N-acetylarylamine + CoA. It carries out the reaction an N-hydroxyarylamine + acetyl-CoA = an N-acetoxyarylamine + CoA. Its activity is regulated as follows. Inhibited by N-ethylmaleimide and iodoacetamide. Its function is as follows. Catalyzes both the acetyl-CoA-dependent N-acetylation of aromatic amines and the O-acetylation of N-hydroxyarylamines. In vitro, catalyzes the O-acetylation of N-hydroxy-Glu-P-1, and the N-acetylation of isoniazid and 2-aminofluorene. This Salmonella typhimurium (strain LT2 / SGSC1412 / ATCC 700720) protein is Arylamine N-acetyltransferase / N-hydroxyarylamine O-acetyltransferase (nhoA).